The sequence spans 202 residues: uncharacterized protein (202 aa).

Lysine 136 participates in a covalent cross-link: Isoglutamyl lysine isopeptide (Lys-Gln) (interchain with Q-Cter in protein Pup).

This is an uncharacterized protein from Mycobacterium tuberculosis (strain ATCC 25618 / H37Rv).